The sequence spans 444 residues: Methylenetetrahydrofolate--tRNA-(uracil-5-)-methyltransferase TrmFO (444 aa).

Residue 10-15 (GAGLAG) participates in FAD binding.

This sequence belongs to the MnmG family. TrmFO subfamily. Requires FAD as cofactor.

Its subcellular location is the cytoplasm. The catalysed reaction is uridine(54) in tRNA + (6R)-5,10-methylene-5,6,7,8-tetrahydrofolate + NADH + H(+) = 5-methyluridine(54) in tRNA + (6S)-5,6,7,8-tetrahydrofolate + NAD(+). It carries out the reaction uridine(54) in tRNA + (6R)-5,10-methylene-5,6,7,8-tetrahydrofolate + NADPH + H(+) = 5-methyluridine(54) in tRNA + (6S)-5,6,7,8-tetrahydrofolate + NADP(+). Its function is as follows. Catalyzes the folate-dependent formation of 5-methyl-uridine at position 54 (M-5-U54) in all tRNAs. The chain is Methylenetetrahydrofolate--tRNA-(uracil-5-)-methyltransferase TrmFO from Streptococcus equi subsp. zooepidemicus (strain H70).